Consider the following 531-residue polypeptide: Unconventional prefoldin RPB5 interactor (531 aa).

Position 1 is an N-acetylmethionine (M1). Disordered regions lie at residues 1–24 (MEPP…APLR), 224–381 (ELES…ELPA), 408–470 (KSRS…SGVS), and 500–531 (TIPE…QQRS). Residues 13–24 (PLAEASAAAPLR) are compositionally biased toward low complexity. Composition is skewed to polar residues over residues 257-266 (SPVTDSSAAS) and 280-296 (GQVN…NSYH). Residues 300–319 (DDDEEEEDDDDDDDEDDDNE) show a composition bias toward acidic residues. The residue at position 369 (S369) is a Phosphoserine; by RPS6KB1. Residues 414–424 (NSVCSDTSESS) show a composition bias toward polar residues. Position 439 is a phosphoserine (S439).

It belongs to the RNA polymerase II subunit 5-mediating protein family. As to quaternary structure, homodimer. Component of the PAQosome complex which is responsible for the biogenesis of several protein complexes and which consists of R2TP complex members RUVBL1, RUVBL2, RPAP3 and PIH1D1, URI complex members PFDN2, PFDN6, PDRG1, UXT and URI1 as well as ASDURF, POLR2E and DNAAF10/WDR92. Interacts with POLR2E/RPB5, RUVBL2 and RUVBL1. Interacts with PFDN2, PFDN4 and STAP1; the interactions are phosphorylation-dependent and occur in a growth-dependent manner in the mitochondrion. Interacts with UXT. Interacts with PPP1CC; the interaction is phosphorylation-dependent and occurs in a growth factor-dependent manner. Interacts (via the middle C-terminal region) with GTF2F1 and GTF2F2. Interacts with DMAP1. Interacts with TSC1 and TSC2. Interacts with PRPF8 and EFTUD2 in a ZNHIT2-dependent manner. Post-translationally, phosphorylation occurs in response to androgen treatment in prostate cancer cells in a mTOR-dependent manner. Phosphorylated; hyperhosphorylated in mitochondria in a mTORC-dependent signaling pathway. Phosphorylated at Ser-369 by RPS6KB1 in a growth factor- and rapamycin-dependent manner. S6K1-mediated mitochondrial phosphorylation at Ser-369 disrupts the URI1-PPP1CC complex in the mitochondrion, relieves PPP1CC phosphatase inhibition activity and hence engages a negative feedback diminishing RPS6KB1 kinase activity, preventing sustained S6K1-dependent signaling. Phosphorylated. Phosphorylation occurs essentially on serine residues. In terms of tissue distribution, expressed in the spinal cord, ganglia, choroid plexus and olfactors epithelium of the developing brain. Expressed in skin, lung, kidney, testis and muscles (at protein level). Expressed strongly in brain and kidney. Expressed weakly in skeletal muscle, lung and liver.

Its subcellular location is the nucleus. The protein localises to the cytoplasm. It is found in the mitochondrion. The protein resides in the cell projection. It localises to the dendrite. Involved in gene transcription regulation. Acts as a transcriptional repressor in concert with the corepressor UXT to regulate androgen receptor (AR) transcription. May act as a tumor suppressor to repress AR-mediated gene transcription and to inhibit anchorage-independent growth in prostate cancer cells. Required for cell survival in ovarian cancer cells. Together with UXT, associates with chromatin to the NKX3-1 promoter region. Its function is as follows. Plays a central role in maintaining S6K1 signaling and BAD phosphorylation under normal growth conditions thereby protecting cells from potential deleterious effects of sustained S6K1 signaling. The URI1-PPP1CC complex acts as a central component of a negative feedback mechanism that counteracts excessive S6K1 survival signaling to BAD in response to growth factors. Mediates inhibition of PPP1CC phosphatase activity in mitochondria. Coordinates the regulation of nutrient-sensitive gene expression availability in a mTOR-dependent manner. Seems to be a scaffolding protein able to assemble a prefoldin-like complex that contains PFDs and proteins with roles in transcription and ubiquitination. The chain is Unconventional prefoldin RPB5 interactor (Uri1) from Mus musculus (Mouse).